The sequence spans 430 residues: Protein POLLENLESS 3-LIKE 2 (430 aa).

The interval 1–21 (MMRDVFRPTKSAPCSPAKPLG) is disordered. TPR repeat units follow at residues 40–73 (DSPY…GDRV), 74–107 (DSAL…CSDQ), 110–143 (ESLD…IQKG), 170–203 (TRLL…APDN), 205–236 (KMCN…VVDG), and 238–257 (RGVD…LNDL). The stretch at 81 to 107 (AIVMKQQNRAEEAIEAIKSLRVRCSDQ) forms a coiled coil. Residues 346–376 (KLKRTRSSSQGMGMLSGIGGDHEGETNTSTR) are disordered.

Belongs to the MS5 protein family.

The protein resides in the nucleus. Its function is as follows. Probably involved in the regulation of cell division. The polypeptide is Protein POLLENLESS 3-LIKE 2 (Arabidopsis thaliana (Mouse-ear cress)).